The primary structure comprises 62 residues: Photosystem II reaction center protein Z (62 aa).

Transmembrane regions (helical) follow at residues 8-28 (AVFA…VVFA) and 41-61 (FSGT…NSLI).

The protein belongs to the PsbZ family. In terms of assembly, PSII is composed of 1 copy each of membrane proteins PsbA, PsbB, PsbC, PsbD, PsbE, PsbF, PsbH, PsbI, PsbJ, PsbK, PsbL, PsbM, PsbT, PsbY, PsbZ, Psb30/Ycf12, at least 3 peripheral proteins of the oxygen-evolving complex and a large number of cofactors. It forms dimeric complexes.

It is found in the plastid. The protein localises to the chloroplast thylakoid membrane. In terms of biological role, may control the interaction of photosystem II (PSII) cores with the light-harvesting antenna, regulates electron flow through the 2 photosystem reaction centers. PSII is a light-driven water plastoquinone oxidoreductase, using light energy to abstract electrons from H(2)O, generating a proton gradient subsequently used for ATP formation. The protein is Photosystem II reaction center protein Z of Jasminum nudiflorum (Winter jasmine).